A 431-amino-acid chain; its full sequence is Metal-binding activator 1 (431 aa).

A DNA-binding region (copper-fist) is located at residues 1-40 (MILIDDIKYACMECVRGHRSSSCKHHERPLLQVRSKGRPG). Zn(2+) is bound by residues Cys-11, Cys-14, Cys-23, and His-25.

It localises to the nucleus. Functionally, copper ion-sensing transcription factor which activates transcription of the CTR1 copper transporter under low-copper conditions. Promotes filamentous and invasive growth. The chain is Metal-binding activator 1 (MAC1) from Candida albicans (strain SC5314 / ATCC MYA-2876) (Yeast).